Here is a 188-residue protein sequence, read N- to C-terminus: FMN-dependent NADPH-azoreductase (188 aa).

The protein belongs to the azoreductase type 2 family. As to quaternary structure, homotetramer. The cofactor is FMN.

Its function is as follows. Catalyzes the reductive cleavage of azo bond in aromatic azo compounds to the corresponding amines. Requires NADPH, but not NADH, as an electron donor for its activity. This Staphylococcus aureus (strain MSSA476) protein is FMN-dependent NADPH-azoreductase (azo1).